Consider the following 669-residue polypeptide: DNA ligase (669 aa).

Residues 34-38 (DAEYD), 83-84 (SL), and glutamate 117 each bind NAD(+). Catalysis depends on lysine 119, which acts as the N6-AMP-lysine intermediate. Residues arginine 140, glutamate 177, lysine 293, and lysine 317 each coordinate NAD(+). Cysteine 411, cysteine 414, cysteine 429, and cysteine 434 together coordinate Zn(2+). The region spanning 591 to 669 (RLGGRFTGKT…EDEFLKMLEG (79 aa)) is the BRCT domain.

Belongs to the NAD-dependent DNA ligase family. LigA subfamily. Mg(2+) is required as a cofactor. The cofactor is Mn(2+).

It catalyses the reaction NAD(+) + (deoxyribonucleotide)n-3'-hydroxyl + 5'-phospho-(deoxyribonucleotide)m = (deoxyribonucleotide)n+m + AMP + beta-nicotinamide D-nucleotide.. In terms of biological role, DNA ligase that catalyzes the formation of phosphodiester linkages between 5'-phosphoryl and 3'-hydroxyl groups in double-stranded DNA using NAD as a coenzyme and as the energy source for the reaction. It is essential for DNA replication and repair of damaged DNA. In Geotalea daltonii (strain DSM 22248 / JCM 15807 / FRC-32) (Geobacter daltonii), this protein is DNA ligase.